Reading from the N-terminus, the 459-residue chain is Antizyme inhibitor 2 (459 aa).

Positions 117–140 (QVAQIKYAAKHGVRLLSFDNEVEL) are necessary for polyamine uptake stimulation.

Belongs to the Orn/Lys/Arg decarboxylase class-II family. ODC antizyme inhibitor subfamily. In terms of assembly, monomer. Interacts with OAZ1, OAZ2 and OAZ3; this interaction disrupts the interaction between the antizyme and ODC1. Does not form a heterodimer with ODC1. In terms of processing, ubiquitinated, leading to its proteasomal degradation; a process that is reduced in presence of antizymes. May also be degraded through the lysosomal degradative pathway in a proteasomal-independent manner. In terms of tissue distribution, expressed in the medulla and chromaffin cells of the adrenal gland. Expressed in the Langerhans islets of the pancreas. Expressed in the inner part of the seminiferous tubules and in spermatozoa located in the lumen of the epididymis of the testis. Expressed in the cortex, hippocampus and cerebellum of the brain. Expressed in normal and neoplastic mast cells (MC) (at protein level). Expressed in testis, pancreas and brain. Expressed throughout the differentiation process from spermatids to spermatozoa in the inner part of the seminiferous tubules. Expressed in the kidney: expressed in the superficial (Cs) and the deep layer (Cd) of the cortex region and in the outer stripe (OS), inner stripe (IS) and the inner medulla papilla (IM) of the medulla region.

The protein localises to the nucleus. Its subcellular location is the cytoplasm. The protein resides in the perinuclear region. It localises to the membrane. It is found in the cytoplasmic vesicle. The protein localises to the endoplasmic reticulum-Golgi intermediate compartment. Its subcellular location is the golgi apparatus. The protein resides in the cis-Golgi network. It localises to the trans-Golgi network. It is found in the cytoplasmic granule. The protein localises to the cell projection. Its subcellular location is the axon. The protein resides in the dendrite. It localises to the perikaryon. Antizyme inhibitor (AZI) protein that positively regulates ornithine decarboxylase (ODC) activity and polyamine uptake. AZI is an enzymatically inactive ODC homolog that counteracts the negative effect of ODC antizymes (AZs) OAZ1, OAZ2 and OAZ3 on ODC activity by competing with ODC for antizyme-binding. Inhibits antizyme-dependent ODC degradation and releases ODC monomers from their inactive complex with antizymes, leading to formation of the catalytically active ODC homodimer and restoring polyamine production. Participates in the morphological integrity of the trans-Golgi network (TGN) and functions as a regulator of intracellular secretory vesicle trafficking. The chain is Antizyme inhibitor 2 (Azin2) from Mus musculus (Mouse).